Here is a 240-residue protein sequence, read N- to C-terminus: Uridylate kinase (240 aa).

12 to 15 (KLSG) lines the ATP pocket. Gly-54 lines the UMP pocket. 2 residues coordinate ATP: Gly-55 and Arg-59. UMP-binding positions include Asp-74 and 135-142 (TGNPFFTT). ATP-binding residues include Thr-162, Tyr-168, and Asp-171.

This sequence belongs to the UMP kinase family. Homohexamer.

It localises to the cytoplasm. The catalysed reaction is UMP + ATP = UDP + ADP. It functions in the pathway pyrimidine metabolism; CTP biosynthesis via de novo pathway; UDP from UMP (UMPK route): step 1/1. With respect to regulation, inhibited by UTP. Its function is as follows. Catalyzes the reversible phosphorylation of UMP to UDP. This is Uridylate kinase from Xanthomonas euvesicatoria pv. vesicatoria (strain 85-10) (Xanthomonas campestris pv. vesicatoria).